The following is a 398-amino-acid chain: MDTQAFRRSLHHSDRYNRRGFDSPTKRAQALEEAYQSDLISSIRDNGFTYTKGRLNIKLAQAFGFCWGVERAVAMAYETRRHYPNENIWITNEIIHNPSVNDHLRKMNVKFISAKNGIKDFSLVSNGDVVILPAFGATVQEMKLLHEKGCHIIDTTCPWVSKVWHTVEKHKKHVFTSIIHGKFKHEETLATSSFAGKYLVVLDLEEANYVSEYILGRGNRNEFMNKFAKACSNGFDPDKDLERVGVANQTTMLKSETEEIGKVFERTMLKKFGPENLNSHFLAFNTICDATEERQDAMFSLVDEDLDILVVIGGFNSSNTTHLQEIAITKNISSFHIDTPERISVKENSIFHKPLGSELELKNNFLPSGKINVGITSGASTPDKVVADVIEKLIDIAS.

[4Fe-4S] cluster is bound at residue C66. H96 provides a ligand contact to (2E)-4-hydroxy-3-methylbut-2-enyl diphosphate. Dimethylallyl diphosphate is bound at residue H96. Residue H96 coordinates isopentenyl diphosphate. C157 contributes to the [4Fe-4S] cluster binding site. H185 serves as a coordination point for (2E)-4-hydroxy-3-methylbut-2-enyl diphosphate. H185 contacts dimethylallyl diphosphate. H185 contacts isopentenyl diphosphate. The active-site Proton donor is the E187. T250 contributes to the (2E)-4-hydroxy-3-methylbut-2-enyl diphosphate binding site. Residue C288 participates in [4Fe-4S] cluster binding. (2E)-4-hydroxy-3-methylbut-2-enyl diphosphate contacts are provided by S317, S318, N319, and S380. Dimethylallyl diphosphate is bound by residues S317, S318, N319, and S380. Residues S317, S318, N319, and S380 each coordinate isopentenyl diphosphate.

It belongs to the IspH family. [4Fe-4S] cluster is required as a cofactor.

It carries out the reaction isopentenyl diphosphate + 2 oxidized [2Fe-2S]-[ferredoxin] + H2O = (2E)-4-hydroxy-3-methylbut-2-enyl diphosphate + 2 reduced [2Fe-2S]-[ferredoxin] + 2 H(+). The enzyme catalyses dimethylallyl diphosphate + 2 oxidized [2Fe-2S]-[ferredoxin] + H2O = (2E)-4-hydroxy-3-methylbut-2-enyl diphosphate + 2 reduced [2Fe-2S]-[ferredoxin] + 2 H(+). It functions in the pathway isoprenoid biosynthesis; dimethylallyl diphosphate biosynthesis; dimethylallyl diphosphate from (2E)-4-hydroxy-3-methylbutenyl diphosphate: step 1/1. The protein operates within isoprenoid biosynthesis; isopentenyl diphosphate biosynthesis via DXP pathway; isopentenyl diphosphate from 1-deoxy-D-xylulose 5-phosphate: step 6/6. Functionally, catalyzes the conversion of 1-hydroxy-2-methyl-2-(E)-butenyl 4-diphosphate (HMBPP) into a mixture of isopentenyl diphosphate (IPP) and dimethylallyl diphosphate (DMAPP). Acts in the terminal step of the DOXP/MEP pathway for isoprenoid precursor biosynthesis. This chain is 4-hydroxy-3-methylbut-2-enyl diphosphate reductase, found in Prochlorococcus marinus (strain MIT 9301).